Reading from the N-terminus, the 624-residue chain is Galactan 5-O-arabinofuranosyltransferase (624 aa).

13 helical membrane-spanning segments follow: residues 5-25 (VLGQMVLAVLMASAVAGVAIA), 43-63 (ALTTVGQFGCLAGLFAAGLLW), 73-93 (LGALAFISAFSVVTLAMPLGA), 127-147 (IGLPPFYPAGWFWLGGRIAAA), 159-179 (WSIVSITIAVALALVLWAAMI), 181-201 (FEYALVATAASTAAMLAYAST), 203-223 (PYAAIITVLMPPVFVLAWAGL), 234-254 (AIVGVGIFLGVAALFYTLLLV), 280-300 (LAVIAVISGAIALLTWAPYLL), 326-346 (FPMFSLTLHGALCMLGTVWLV), 355-375 (AGALAVAVVAVYAWSLLSMLT), 391-411 (LTVLLTTAGAFGFIEATLAIA), and 422-442 (VVAAATAVGAIGAVTFSQDIP).

The protein belongs to the glycosyltransferase 85 family.

The protein localises to the cell membrane. It carries out the reaction Adds an alpha-D-arabinofuranosyl group from trans,octacis-decaprenylphospho-beta-D-arabinofuranose at the 5-O-position of the eighth, tenth and twelfth galactofuranose unit of the galactofuranan chain of [beta-D-galactofuranosyl-(1-&gt;5)-beta-D-galactofuranosyl-(1-&gt;6)]14-beta-D-galactofuranosyl-(1-&gt;5)-beta-D-galactofuranosyl-(1-&gt;4)-alpha-L-rhamnopyranosyl-(1-&gt;3)-N-acetyl-alpha-D-glucosaminyl-diphospho-trans,octacis-decaprenol.. It participates in cell wall biogenesis; cell wall polysaccharide biosynthesis. In terms of biological role, involved in the biosynthesis of the arabinogalactan (AG) region of the mycolylarabinogalactan-peptidoglycan (mAGP) complex, an essential component of the mycobacterial cell wall. Catalyzes the addition of the first key arabinofuranosyl (Araf) residue from the sugar donor decaprenyl-phospho-arabinose (DPA) on the C-5 of a 6-linked galactofuranosyl (Galf) of the galactan domain, thus 'priming' the galactan for further elaboration by other arabinofuranosyltransferases. It is not able to add an Araf residue to a terminal Galf. The chain is Galactan 5-O-arabinofuranosyltransferase from Mycolicibacterium smegmatis (strain ATCC 700084 / mc(2)155) (Mycobacterium smegmatis).